Here is a 143-residue protein sequence, read N- to C-terminus: Actin-depolymerizing factor 2 (143 aa).

The ADF-H domain occupies 5–139 (ASGMAVHDDC…GLDVFRSRAG (135 aa)).

Belongs to the actin-binding proteins ADF family.

Functionally, actin-depolymerizing protein. Severs actin filaments (F-actin) and binds to actin monomers. This is Actin-depolymerizing factor 2 (ADF2) from Petunia hybrida (Petunia).